Consider the following 951-residue polypeptide: PE-PGRS family protein PE_PGRS3 (951 aa).

One can recognise a PE domain in the interval 4–94; it reads VIAAPEVIAA…GAYAAAEAAA (91 aa). The segment covering 887–919 has biased composition (basic residues); the sequence is CRRQRRADRQRRQRRQRRQSRGHARCRRHRRAA. The tract at residues 887–951 is disordered; the sequence is CRRQRRADRQ…GISCSPQMMP (65 aa).

It belongs to the mycobacterial PE family. PGRS subfamily.

Its subcellular location is the cell outer membrane. It is found in the secreted. The protein resides in the cell wall. The protein localises to the cell surface. The arginine-rich C-terminal region protrudes from the mycobacterial membrane and mediates M.tuberculosis entry into host epithelial cells. May serve as a bridge between mycobacteria and host cells by interacting with specific host phospholipids and extracting them from host cells, for their direct integration or as a source of phosphate, during phases of TB pathogenesis when M.tuberculosis is short of phosphate supply. The polypeptide is PE-PGRS family protein PE_PGRS3 (PE_PGRS3) (Mycobacterium tuberculosis (strain CDC 1551 / Oshkosh)).